A 303-amino-acid chain; its full sequence is THAP domain-containing protein 11 (303 aa).

A THAP-type zinc finger spans residues 6-64; that stretch reads CCVPGCYNNSHRDKALHFYTFPKDAELRRLWLKNVSRAGVSGCFSTFQPTTGHRLCSVH. Disordered stretches follow at residues 85–132 and 155–174; these read VNER…AQTT and SSQA…GEDV. Residues 93–132 are compositionally biased toward low complexity; that stretch reads RPAGAAAARRRQQQQQQQQQQQQQQQQQQPSPSASTAQTT. Residues 232 to 235 carry the HCFC1-binding motif (HBM) motif; sequence DHSY. The stretch at 244 to 294 forms a coiled coil; it reads EELLRKLNEQRDILALMEVKMKEMKGSIRHLRLTEAKLREELREKDRLLAM.

It belongs to the THAP11 family. As to quaternary structure, forms homodimers. Interacts via HBM with HCFC1. Forms a complex with HCFC1 and ZNF143.

It is found in the nucleus. It localises to the cytoplasm. Its function is as follows. Transcription factor, which has both transcriptional activation and repression activities. Also modulates chromatin accessibility. In complex with HCFC1 and ZNF143, regulates the expression of several genes, including AP2S1, ESCO2, OPHN1, RBL1, UBXN8 and ZNF32. May regulate the expression of genes that encode both cytoplasmic and mitochondrial ribosomal proteins. Required for normal mitochondrial development and function. Regulates mitochondrial gene expression, including that of components of the electron transport chain. Involved in the maintainance of pluripotency in early embryonic cells, possibly through its action on mitochondrial maturation which is required to meet high energy demands of these cells. Required for early development of retina, preventing premature exit of retinal progenitor cells from the cell cycle. This effect may also be mediated by its action on mitochondria. Through the regulation of MMACHC gene expression, controls cobalamin metabolism. Required for normal brain development and neural precursor differentiation. Involved in cell growth. The protein is THAP domain-containing protein 11 (THAP11) of Bos taurus (Bovine).